A 462-amino-acid chain; its full sequence is uncharacterized protein (462 aa).

The segment at 1-108 (MEDSNTNKDI…NGQDDQDEMD (108 aa)) is disordered. Positions 36–51 (TVERILERKQKERESK) are enriched in basic and acidic residues. A compositionally biased stretch (low complexity) spans 64 to 95 (SSPSSLLSSPISSNDNNNNNNNNNNESFDINN). The stretch at 119-150 (LLKRKAALAAKKKESLAEQMKKYNQQYDSIIS) forms a coiled coil. Residues 188-208 (SKLQSLNNNTSPSTSSSNLID) are disordered. A compositionally biased stretch (low complexity) spans 190–208 (LQSLNNNTSPSTSSSNLID).

This is an uncharacterized protein from Dictyostelium discoideum (Social amoeba).